The following is a 1171-amino-acid chain: DNA polymerase catalytic subunit (1171 aa).

Disordered stretches follow at residues 647-687 (GTPA…PFRT), 704-735 (PGGGAVSSASVGGRAAVSPSETPAEREPEPAP), and 1149-1171 (VEEEVCESERGGSGLLSSLDSSR). The span at 649–662 (PARPPETPARPPET) shows a compositional bias: pro residues. Low complexity-rich tracts occupy residues 663-674 (PAAGPSGAAHAG) and 709-725 (VSSASVGGRAAVSPSET). The span at 1149–1158 (VEEEVCESER) shows a compositional bias: basic and acidic residues.

Belongs to the DNA polymerase type-B family.

The protein resides in the host nucleus. It catalyses the reaction DNA(n) + a 2'-deoxyribonucleoside 5'-triphosphate = DNA(n+1) + diphosphate. The polypeptide is DNA polymerase catalytic subunit (DPOL) (Tupaia belangeri (Common tree shrew)).